Consider the following 176-residue polypeptide: Cytochrome b (176 aa).

3 helical membrane passes run 33 to 53 (FGSL…FLAM), 77 to 98 (WVLR…YLHV), and 113 to 133 (WNMG…GYVL). Residues histidine 83 and histidine 97 each coordinate heme b.

Belongs to the cytochrome b family. The cytochrome bc1 complex contains 11 subunits: 3 respiratory subunits (MT-CYB, CYC1 and UQCRFS1), 2 core proteins (UQCRC1 and UQCRC2) and 6 low-molecular weight proteins (UQCRH/QCR6, UQCRB/QCR7, UQCRQ/QCR8, UQCR10/QCR9, UQCR11/QCR10 and a cleavage product of UQCRFS1). This cytochrome bc1 complex then forms a dimer. The cofactor is heme b.

The protein localises to the mitochondrion inner membrane. In terms of biological role, component of the ubiquinol-cytochrome c reductase complex (complex III or cytochrome b-c1 complex) that is part of the mitochondrial respiratory chain. The b-c1 complex mediates electron transfer from ubiquinol to cytochrome c. Contributes to the generation of a proton gradient across the mitochondrial membrane that is then used for ATP synthesis. The polypeptide is Cytochrome b (MT-CYB) (Nycticeius humeralis (Evening bat)).